The sequence spans 241 residues: MSNFAVSLPEVIAVLPAAGIGSRMLADCPKQYLTVGGKTIIEHAIFSLLHHPRIQRVIVVIHPQDTQFSRLSVAQDPRISTVYGGDQRANSVMAGLQLAGQAEWVLVHDAARPCLHLDDLSRLLSITECSQVGGILAAPVRDTMKRAEPGIQAIAHTVDRQDLWHALTPQLFPLELLKLCLSRALREGVAVTDEASALEHCGYHPILVTGRSDNIKVTRPEDLALAEFYLTQRQSLNNDSL.

The protein belongs to the IspD/TarI cytidylyltransferase family. IspD subfamily. Homodimer.

The catalysed reaction is 2-C-methyl-D-erythritol 4-phosphate + CTP + H(+) = 4-CDP-2-C-methyl-D-erythritol + diphosphate. The protein operates within isoprenoid biosynthesis; isopentenyl diphosphate biosynthesis via DXP pathway; isopentenyl diphosphate from 1-deoxy-D-xylulose 5-phosphate: step 2/6. Functionally, catalyzes the formation of 4-diphosphocytidyl-2-C-methyl-D-erythritol from CTP and 2-C-methyl-D-erythritol 4-phosphate (MEP). This is 2-C-methyl-D-erythritol 4-phosphate cytidylyltransferase from Yersinia pseudotuberculosis serotype IB (strain PB1/+).